Reading from the N-terminus, the 69-residue chain is DLITNSYTRGKPRHVTSWRNLKTRDVCDSLVEGRCIHNGCQCDRSAPHGNCCDTDGCTSLWWCPKTKWD.

Positions 1-23 are excised as a propeptide; the sequence is DLITNSYTRGKPRHVTSWRNLKT.

In terms of processing, contains 4 disulfide bonds. As to expression, expressed by the venom duct.

Its subcellular location is the secreted. The sequence is that of Conotoxin Cal12.1p4 from Californiconus californicus (California cone).